The following is a 356-amino-acid chain: Protein trichome birefringence-like 41 (356 aa).

The helical; Signal-anchor for type II membrane protein transmembrane segment at 12–31 threads the bilayer; sequence SALVLSLLLLLLLPLLHEAA. Residues 107–109 carry the GDS motif motif; sequence GDS. A DCXHWCLPGXXDXWN motif motif is present at residues 333–347; that stretch reads DCSHWCLSGVPDTWN.

The protein belongs to the PC-esterase family. TBL subfamily.

The protein localises to the membrane. May act as a bridging protein that binds pectin and other cell wall polysaccharides. Probably involved in maintaining esterification of pectins. May be involved in the specific O-acetylation of cell wall polymers. The protein is Protein trichome birefringence-like 41 (TBL41) of Arabidopsis thaliana (Mouse-ear cress).